A 1364-amino-acid polypeptide reads, in one-letter code: Outer kinetochore KNL1 complex subunit spc7 (1364 aa).

Positions 1-15 (MPTSPRRNSIATTDN) are enriched in polar residues. 3 disordered regions span residues 1 to 36 (MPTS…GALQ), 124 to 190 (YPKD…DIAS), and 202 to 223 (EALN…LSIQ). The span at 124 to 136 (YPKDHQSDSEKST) shows a compositional bias: basic and acidic residues. The segment covering 157–169 (GPTTTSFSRNETQ) has biased composition (polar residues). The segment covering 170–181 (SSPHSHSASIIS) has biased composition (low complexity). Positions 254–257 (MDLT) match the MELT; degenerate motif. Phosphothreonine; by mph1 is present on Thr257. Residues 289–334 (ASHDPSNQTQLSSPNKSSSPTSIEISDFSKNNENHDQSENKEEEED) are disordered. Positions 300–310 (SSPNKSSSPTS) are enriched in low complexity. Over residues 318–328 (KNNENHDQSEN) the composition is skewed to basic and acidic residues. Residues 450–453 (MDLT) carry the MELT; degenerate motif. Thr453 is subject to Phosphothreonine; by mph1. Residues 456-503 (ISSTNAPTHLNEDDLNQFTSNISSSSKPRKDNNKTANSSKPIPDSEDF) are disordered. Positions 471–481 (NQFTSNISSSS) are enriched in polar residues. The short motif at 504 to 507 (MDIT) is the MELT; degenerate element. Thr507 carries the post-translational modification Phosphothreonine; by mph1. Disordered stretches follow at residues 564-643 (LPSA…SSFD) and 697-837 (GATP…GVSN). The segment covering 566 to 585 (SADKENAEREEIPSYSDKSE) has biased composition (basic and acidic residues). Polar residues predominate over residues 586 to 617 (NFNTTSFTNHERSPNGNNNLKFSKDPNSSSPS). The segment covering 719-730 (EVSRQPTDDKGE) has biased composition (basic and acidic residues). Positions 747–773 (LTIQQTNEIKHVPTNTTSSVKLPQQPS) are enriched in polar residues. Residues 791 to 802 (SLERLESQEPNR) show a composition bias toward basic and acidic residues. Residues 808–820 (VGSSNAGNTTSVG) show a composition bias toward polar residues. Residues 1075–1155 (LAQAQEKLEK…EEQLLNLKNE (81 aa)) are a coiled coil. The short motif at 1091-1105 (RRRRLLSEKEERRKE) is the Nuclear localization signal element.

In terms of assembly, component of the KNL1/SPC105 complex composed of at least spc7 and sos7. Part of the outer kinetochore KMN network that includes the KNL1, MIS12 and NDC80 complexes. Interacts (via C-terminus) with sos7 (via C-terminus); the interaction is direct. Interacts (when phosphorylated on MELT motifs) with bub1 and bub3; to recruit the BUB1-BUB3 complex to the kinetochore. In terms of processing, phosphorylation of threonine residues in the MELT motifs by mph1/mps1 leads to recruitment of bub1 and bub3 to the kinetochore, and is required to maintain spindle assembly checkpoint signaling.

It is found in the nucleus. It localises to the chromosome. The protein localises to the centromere. The protein resides in the kinetochore. In terms of biological role, acts as a component of the outer kinetochore KNL1 complex that serves as a docking point for spindle assembly checkpoint components and mediates microtubule-kinetochore interactions. Kinetochores, consisting of a centromere-associated inner segment and a microtubule-contacting outer segment, play a crucial role in chromosome segregation by mediating the physical connection between centromeric DNA and spindle microtubules. The outer kinetochore is made up of the ten-subunit KMN network, comprising the MIS12, NDC80 and KNL1 complexes, and auxiliary microtubule-associated components; together they connect the outer kinetochore with the inner kinetochore, bind microtubules, and mediate interactions with mitotic checkpoint proteins that delay anaphase until chromosomes are bioriented on the spindle. Recruits the BUB1-BUB3 complex to kinetochores when phosphorylated by mph1/mps1, to support spindle assembly checkpoint signaling. Functions both in mitotic and in meiotic chromosome segregation. The chain is Outer kinetochore KNL1 complex subunit spc7 from Schizosaccharomyces pombe (strain 972 / ATCC 24843) (Fission yeast).